A 120-amino-acid polypeptide reads, in one-letter code: Small ribosomal subunit protein bS6 (120 aa).

It belongs to the bacterial ribosomal protein bS6 family.

Its function is as follows. Binds together with bS18 to 16S ribosomal RNA. The polypeptide is Small ribosomal subunit protein bS6 (Blochmanniella floridana).